We begin with the raw amino-acid sequence, 385 residues long: Multicilin (385 aa).

The tract at residues 1 to 130 (MQACGGGAAG…TVDDLISDSS (130 aa)) is necessary and sufficient for its degradation during the cell cycle. The interval 86–111 (SSLLGSDAPPGGDLAASQNHSHQTEA) is disordered. A necessary and sufficient for proper nuclear localization region spans residues 131 to 385 (SMMSPTLASG…GGYKFRWVPS (255 aa)). The segment at 173–245 (PDVPPPEQYW…SVLDKLMITQ (73 aa)) is necessary and sufficient for interaction with GMNN and sufficient for homodimerization. Residues 179–227 (EQYWKEVADQNQRALGDALVENNQLHVTLTQKQEEIASLKERNVQLKEL) adopt a coiled-coil conformation. Residues 294–319 (ALQSRDPKRPRLLPEPANTDTRPGNL) are disordered.

Belongs to the geminin family. In terms of assembly, heterodimer (via coiled-coil domain) with GMNN (via coiled-coil domain); targets GMNN to the nucleus. Can form homodimers (in vitro, via coiled-coil domain), but these are much less stable than the heterodimer formed with GMNN.

Its subcellular location is the nucleus. Transcription regulator specifically required for multiciliate cell differentiation. Acts in a multiprotein complex containing E2F4 and E2F5 that binds and activates genes required for centriole biogenesis. Required for the deuterosome-mediated acentriolar pathway. Plays a role in mitotic cell cycle progression by promoting cell cycle exit. Modulates GMNN activity by reducing its affinity for CDT1. This is Multicilin from Homo sapiens (Human).